The chain runs to 229 residues: Uracil-DNA glycosylase (229 aa).

Asp-64 serves as the catalytic Proton acceptor.

It belongs to the uracil-DNA glycosylase (UDG) superfamily. UNG family.

The protein resides in the cytoplasm. The catalysed reaction is Hydrolyzes single-stranded DNA or mismatched double-stranded DNA and polynucleotides, releasing free uracil.. Its function is as follows. Excises uracil residues from the DNA which can arise as a result of misincorporation of dUMP residues by DNA polymerase or due to deamination of cytosine. In Geobacillus thermodenitrificans (strain NG80-2), this protein is Uracil-DNA glycosylase.